The sequence spans 122 residues: Large ribosomal subunit protein eL18 (122 aa).

Belongs to the eukaryotic ribosomal protein eL18 family.

The chain is Large ribosomal subunit protein eL18 from Picrophilus torridus (strain ATCC 700027 / DSM 9790 / JCM 10055 / NBRC 100828 / KAW 2/3).